A 261-amino-acid chain; its full sequence is Adenosylcobinamide-GDP ribazoletransferase (261 aa).

A run of 5 helical transmembrane segments spans residues 12 to 32 (NLFF…WVVI), 46 to 66 (LVGL…QLIL), 67 to 87 (PASI…GAFH), 120 to 140 (GALS…ELAL), and 199 to 219 (IFVL…TLWL).

Belongs to the CobS family. It depends on Mg(2+) as a cofactor.

The protein resides in the cell inner membrane. It catalyses the reaction alpha-ribazole + adenosylcob(III)inamide-GDP = adenosylcob(III)alamin + GMP + H(+). The catalysed reaction is alpha-ribazole 5'-phosphate + adenosylcob(III)inamide-GDP = adenosylcob(III)alamin 5'-phosphate + GMP + H(+). The protein operates within cofactor biosynthesis; adenosylcobalamin biosynthesis; adenosylcobalamin from cob(II)yrinate a,c-diamide: step 7/7. In terms of biological role, joins adenosylcobinamide-GDP and alpha-ribazole to generate adenosylcobalamin (Ado-cobalamin). Also synthesizes adenosylcobalamin 5'-phosphate from adenosylcobinamide-GDP and alpha-ribazole 5'-phosphate. This Shewanella frigidimarina (strain NCIMB 400) protein is Adenosylcobinamide-GDP ribazoletransferase.